Consider the following 420-residue polypeptide: D-tagatose-1,6-bisphosphate aldolase subunit GatZ (420 aa).

Belongs to the GatZ/KbaZ family. GatZ subfamily. As to quaternary structure, forms a complex with GatY.

The protein operates within carbohydrate metabolism; D-tagatose 6-phosphate degradation; D-glyceraldehyde 3-phosphate and glycerone phosphate from D-tagatose 6-phosphate: step 2/2. Its function is as follows. Component of the tagatose-1,6-bisphosphate aldolase GatYZ that is required for full activity and stability of the Y subunit. Could have a chaperone-like function for the proper and stable folding of GatY. When expressed alone, GatZ does not show any aldolase activity. Is involved in the catabolism of galactitol. This chain is D-tagatose-1,6-bisphosphate aldolase subunit GatZ, found in Shigella boydii serotype 18 (strain CDC 3083-94 / BS512).